Reading from the N-terminus, the 322-residue chain is Ribosomal RNA small subunit methyltransferase H (322 aa).

S-adenosyl-L-methionine contacts are provided by residues 40-42 (GGH), Asp60, Phe84, Asp106, and Gln113.

Belongs to the methyltransferase superfamily. RsmH family.

It is found in the cytoplasm. The catalysed reaction is cytidine(1402) in 16S rRNA + S-adenosyl-L-methionine = N(4)-methylcytidine(1402) in 16S rRNA + S-adenosyl-L-homocysteine + H(+). In terms of biological role, specifically methylates the N4 position of cytidine in position 1402 (C1402) of 16S rRNA. The chain is Ribosomal RNA small subunit methyltransferase H from Aggregatibacter aphrophilus (strain NJ8700) (Haemophilus aphrophilus).